Here is a 237-residue protein sequence, read N- to C-terminus: GATA zinc finger domain-containing protein 18 (237 aa).

Low complexity-rich tracts occupy residues 1–28 (MAHNNNNNINNNNNNNNNNNNNNNKNNN) and 87–118 (NTSTNTTTTTTTTTTTTTTSSPNNNVITPNSN). Disordered stretches follow at residues 1 to 31 (MAHNNNNNINNNNNNNNNNNNNNNKNNNSEY), 78 to 119 (PTNT…NSNL), and 140 to 186 (FEEG…GGCS). Residues 140–151 (FEEGDDEEETSS) are compositionally biased toward acidic residues. A compositionally biased stretch (low complexity) spans 152–167 (DSDSSSSSSTSSSSSE). The segment at 185–212 (CSICKTQETPYWRKGKDGDKTVYLCNAC) adopts a GATA-type zinc-finger fold.

The protein is GATA zinc finger domain-containing protein 18 (gtaR) of Dictyostelium discoideum (Social amoeba).